A 166-amino-acid polypeptide reads, in one-letter code: Endoribonuclease YbeY (166 aa).

Residues histidine 132, histidine 136, and histidine 142 each contribute to the Zn(2+) site.

The protein belongs to the endoribonuclease YbeY family. The cofactor is Zn(2+).

It localises to the cytoplasm. In terms of biological role, single strand-specific metallo-endoribonuclease involved in late-stage 70S ribosome quality control and in maturation of the 3' terminus of the 16S rRNA. This chain is Endoribonuclease YbeY, found in Clostridium botulinum (strain Alaska E43 / Type E3).